An 885-amino-acid chain; its full sequence is Chromatin assembly factor 1 subunit A-B (885 aa).

Disordered stretches follow at residues 1–24 (MPGK…KMVQ), 115–157 (EDSN…NEEC), 176–361 (LDKP…EEEK), and 536–605 (VDSD…QKLK). Over residues 12–21 (KSSTKSNTKK) the composition is skewed to low complexity. 3 stretches are compositionally biased toward polar residues: residues 116–128 (DSNI…SPLN), 134–157 (QLAN…NEEC), and 182–193 (SAASCTSVSNFS). Low complexity-rich tracts occupy residues 211 to 227 (VSVS…SPDV) and 237 to 254 (SSPS…SNKT). Residues 251–376 (SNKTSAEKKK…KAEITRFLQK (126 aa)) are a coiled coil. The span at 255–361 (SAEKKKTKDK…EEKRLKEEEK (107 aa)) shows a compositional bias: basic and acidic residues. Acidic residues-rich tracts occupy residues 536 to 548 (VDSD…EEPG) and 557 to 573 (ENED…DDDG). Positions 629–665 (CVWCDSKASEIRLLQKFSACILESPAVEEELTQDISS) are necessary for homodimerization, competence for chromatin assembly.

This sequence belongs to the CHAF1A family. Homodimer.

The protein resides in the nucleus. In terms of biological role, involved in chromatin assembly in DNA replication and DNA repair. The chain is Chromatin assembly factor 1 subunit A-B (chaf1a-b) from Xenopus laevis (African clawed frog).